Here is a 263-residue protein sequence, read N- to C-terminus: Pimeloyl-[acyl-carrier protein] methyl ester esterase (263 aa).

Substrate contacts are provided by residues tryptophan 23, 90–91, and 152–156; these read SL and FLTLQ. The active-site Nucleophile is serine 90. Catalysis depends on residues aspartate 216 and histidine 244. Position 244 (histidine 244) interacts with substrate.

It belongs to the AB hydrolase superfamily. Carboxylesterase BioH family. Monomer.

Its subcellular location is the cytoplasm. The enzyme catalyses 6-carboxyhexanoyl-[ACP] methyl ester + H2O = 6-carboxyhexanoyl-[ACP] + methanol + H(+). The protein operates within cofactor biosynthesis; biotin biosynthesis. In terms of biological role, the physiological role of BioH is to remove the methyl group introduced by BioC when the pimeloyl moiety is complete. It allows to synthesize pimeloyl-ACP via the fatty acid synthetic pathway through the hydrolysis of the ester bonds of pimeloyl-ACP esters. This is Pimeloyl-[acyl-carrier protein] methyl ester esterase from Nitrosospira multiformis (strain ATCC 25196 / NCIMB 11849 / C 71).